Reading from the N-terminus, the 110-residue chain is Keratin, type I cytoskeletal 19 (110 aa).

The tract at residues 1 to 8 is head; sequence FGSGGVFR. Residue Ser-3 is modified to Phosphoserine. Residues 7 to 110 enclose the IF rod domain; that stretch reads FRITMQNLND…KLEQEIATYR (104 aa). Arg-8 bears the Omega-N-methylarginine mark. The tract at residues 9-42 is coil 1A; that stretch reads ITMQNLNDRLASYLDKVRALEQANGELEVKIRDW. Residues 43 to 45 are linker 1; sequence YQK. Residues 46–83 form a coil 1B region; sequence IVLQIDNARTKFETEQALRVLDELTLARKNHEEEISAL. Residues 85–110 are coil 2; it reads ADTERQNQEYQQLMDIKLEQEIATYR. The necessary for interaction with PNN stretch occupies residues 85–110; that stretch reads ADTERQNQEYQQLMDIKLEQEIATYR.

This sequence belongs to the intermediate filament family. In terms of assembly, heterotetramer of two type I and two type II keratins. Interacts with PNN and the actin-binding domain of DMD.

In terms of biological role, involved in the organization of myofibers. Together with KRT8, helps to link the contractile apparatus to dystrophin at the costameres of striated muscle. This chain is Keratin, type I cytoskeletal 19, found in Mesocricetus auratus (Golden hamster).